The primary structure comprises 87 residues: Large ribosomal subunit protein bL27 (87 aa).

The interval 1-24 is disordered; the sequence is MAHKKGTGSTRNGRDSRSQRLGVK.

Belongs to the bacterial ribosomal protein bL27 family.

The sequence is that of Large ribosomal subunit protein bL27 from Crocosphaera subtropica (strain ATCC 51142 / BH68) (Cyanothece sp. (strain ATCC 51142)).